Here is a 117-residue protein sequence, read N- to C-terminus: Large ribosomal subunit protein uL24 (117 aa).

The span at 1–12 shows a compositional bias: polar residues; it reads MSKKNSQTSPQR. Residues 1–20 are disordered; that stretch reads MSKKNSQTSPQRQKMHVKKG.

This sequence belongs to the universal ribosomal protein uL24 family. In terms of assembly, part of the 50S ribosomal subunit.

In terms of biological role, one of two assembly initiator proteins, it binds directly to the 5'-end of the 23S rRNA, where it nucleates assembly of the 50S subunit. One of the proteins that surrounds the polypeptide exit tunnel on the outside of the subunit. This Microcystis aeruginosa (strain NIES-843 / IAM M-2473) protein is Large ribosomal subunit protein uL24.